The primary structure comprises 593 residues: MTADNAIFIPPYKADDQDVVVELNNRFGAEAFVAQETRTGMPVLWVKRAQLKEVLSFLRGVAKPYSMLYDLHGVDERLRTQRRGLPAADFSVFYHLLSIERNSDVMIKVSLSEGDLNLPTVTGIWPNANWYEREVWDMFGIDFAGHPHLSRIMMPPTWEGHPLRKDYPARATEFDPYSLTLAKQQLEEESARFNPEAWGMKRQGANEDYMFLNLGPNHPSAHGAFRIVLQLDGEEIVDCVPDIGYHHRGAEKMAERQSWHSFIPYTDRIDYLGGVMNNLPYVLAVEKLAGIKVPQKVDVIRIMLAEFFRITSHLLFLGTYIQDVGAMTPVFFTFTDRQRAYTVIEAITGFRLHPAWYRIGGVAHDLPRGWDKLVKDFVEWLPKRLDEYTKAALQNSILKGRTIGVAAYNTKEALEWGTTGAGLRATGCNFDLRKARPYSGYENFEFEVPLAHNGDAYDRCMVRVEEMRQSIRIIDQCLRNMPEGPYKADHPLTTPPPKERTLQHIETLITHFLQVSWGPVMPANESFQMIEATKGINSYYLTSDGGTMSYRTRIRTPSYPHLQQIPSVIKGSMVADLIAYLGSIDFVMADVDR.

The segment at 1–184 (MTADNAIFIP…DPYSLTLAKQ (184 aa)) is NADH dehydrogenase I subunit C. Residues 208 to 593 (DYMFLNLGPN…IDFVMADVDR (386 aa)) form an NADH dehydrogenase I subunit D region.

The protein in the N-terminal section; belongs to the complex I 30 kDa subunit family. It in the C-terminal section; belongs to the complex I 49 kDa subunit family. As to quaternary structure, NDH-1 is composed of 13 different subunits. Subunits NuoB, CD, E, F, and G constitute the peripheral sector of the complex.

It localises to the cell inner membrane. It catalyses the reaction a quinone + NADH + 5 H(+)(in) = a quinol + NAD(+) + 4 H(+)(out). In terms of biological role, NDH-1 shuttles electrons from NADH, via FMN and iron-sulfur (Fe-S) centers, to quinones in the respiratory chain. The immediate electron acceptor for the enzyme in this species is believed to be ubiquinone. Couples the redox reaction to proton translocation (for every two electrons transferred, four hydrogen ions are translocated across the cytoplasmic membrane), and thus conserves the redox energy in a proton gradient. In Pseudomonas putida (strain ATCC 700007 / DSM 6899 / JCM 31910 / BCRC 17059 / LMG 24140 / F1), this protein is NADH-quinone oxidoreductase subunit C/D.